Consider the following 278-residue polypeptide: Large ribosomal subunit protein uL2 (278 aa).

The segment at Trp214–Ser278 is disordered.

The protein belongs to the universal ribosomal protein uL2 family. In terms of assembly, part of the 50S ribosomal subunit. Forms a bridge to the 30S subunit in the 70S ribosome.

Functionally, one of the primary rRNA binding proteins. Required for association of the 30S and 50S subunits to form the 70S ribosome, for tRNA binding and peptide bond formation. It has been suggested to have peptidyltransferase activity; this is somewhat controversial. Makes several contacts with the 16S rRNA in the 70S ribosome. This chain is Large ribosomal subunit protein uL2, found in Chelativorans sp. (strain BNC1).